A 364-amino-acid chain; its full sequence is Probable mannose-1-phosphate guanylyltransferase 2 (364 aa).

GDP-alpha-D-mannose is bound by residues Leu6 and Val7. Diphosphate contacts are provided by Gly9, Gly11, Thr12, Arg13, and Lys23. Residues Gly88, Asn112, Asp114, Gly149, and Asn176 each contribute to the GDP-alpha-D-mannose site.

It belongs to the transferase hexapeptide repeat family.

It catalyses the reaction alpha-D-mannose 1-phosphate + GTP + H(+) = GDP-alpha-D-mannose + diphosphate. Its pathway is nucleotide-sugar biosynthesis; GDP-alpha-D-mannose biosynthesis; GDP-alpha-D-mannose from alpha-D-mannose 1-phosphate (GTP route): step 1/1. Its function is as follows. Catalyzes a reaction of the Smirnoff-Wheeler pathway, the major route to ascorbate biosynthesis in plants. This is Probable mannose-1-phosphate guanylyltransferase 2 from Arabidopsis thaliana (Mouse-ear cress).